A 433-amino-acid polypeptide reads, in one-letter code: Probable oxaloacetate decarboxylase beta chain (433 aa).

The next 9 membrane-spanning stretches (helical) occupy residues 13–35, 125–147, 162–184, 189–211, 215–237, 267–289, 309–328, 340–362, and 404–426; these read LFHL…YLAI, YLFY…GVGA, LLGA…LSSL, FSVA…AIYV, LAPE…VPMI, IGFP…PLLG, TAQN…SVGS, TIGI…VLMA, and FLLM…AAGV.

The protein belongs to the GcdB/MmdB/OadB family. As to quaternary structure, heterotrimer of an alpha, a beta and a gamma subunit. Na(+) serves as cofactor.

The protein localises to the cell membrane. The catalysed reaction is oxaloacetate + 2 Na(+)(in) + H(+) = pyruvate + 2 Na(+)(out) + CO2. Functionally, catalyzes the decarboxylation of oxaloacetate coupled to Na(+) translocation. This chain is Probable oxaloacetate decarboxylase beta chain (oadB), found in Vibrio cholerae serotype O1 (strain ATCC 39315 / El Tor Inaba N16961).